Reading from the N-terminus, the 331-residue chain is tRNA-cytidine(32) 2-sulfurtransferase (331 aa).

Residues 1 to 33 form a disordered region; sequence MNAPHMNDTAADAATLDDAAAPAGRPALTRREQ. The span at 8 to 23 shows a compositional bias: low complexity; the sequence is DTAADAATLDDAAAPA. The short motif at 71–76 is the PP-loop motif element; that stretch reads SGGKDS. [4Fe-4S] cluster is bound by residues C146, C149, and C237.

Belongs to the TtcA family. As to quaternary structure, homodimer. Mg(2+) is required as a cofactor. It depends on [4Fe-4S] cluster as a cofactor.

It localises to the cytoplasm. It catalyses the reaction cytidine(32) in tRNA + S-sulfanyl-L-cysteinyl-[cysteine desulfurase] + AH2 + ATP = 2-thiocytidine(32) in tRNA + L-cysteinyl-[cysteine desulfurase] + A + AMP + diphosphate + H(+). Its pathway is tRNA modification. Catalyzes the ATP-dependent 2-thiolation of cytidine in position 32 of tRNA, to form 2-thiocytidine (s(2)C32). The sulfur atoms are provided by the cysteine/cysteine desulfurase (IscS) system. The sequence is that of tRNA-cytidine(32) 2-sulfurtransferase from Burkholderia orbicola (strain MC0-3).